Here is a 309-residue protein sequence, read N- to C-terminus: Homoserine O-succinyltransferase (309 aa).

C142 (acyl-thioester intermediate) is an active-site residue. Substrate contacts are provided by K163 and S192. The active-site Proton acceptor is the H235. The active site involves E237. R249 lines the substrate pocket.

It belongs to the MetA family. In terms of assembly, homodimer.

The protein localises to the cytoplasm. It carries out the reaction L-homoserine + succinyl-CoA = O-succinyl-L-homoserine + CoA. It functions in the pathway amino-acid biosynthesis; L-methionine biosynthesis via de novo pathway; O-succinyl-L-homoserine from L-homoserine: step 1/1. Functionally, transfers a succinyl group from succinyl-CoA to L-homoserine, forming succinyl-L-homoserine. In Salmonella arizonae (strain ATCC BAA-731 / CDC346-86 / RSK2980), this protein is Homoserine O-succinyltransferase.